The primary structure comprises 490 residues: Adenylyltransferase and sulfurtransferase uba4 (490 aa).

Residues 33–54 form a disordered region; it reads EAAKTPPYSDSTETDRGSSSST. Residues Gly-96, Asp-117, 124–128, Lys-141, and 185–186 each bind ATP; these read SNLHR and DH. Residues Cys-234 and Cys-237 each contribute to the Zn(2+) site. The active-site Glycyl thioester intermediate; for adenylyltransferase activity is Cys-251. 2 residues coordinate Zn(2+): Cys-323 and Cys-326. A Rhodanese domain is found at 379-488; the sequence is EHGKPVLLDV…WKREVDSTLP (110 aa). Cys-443 acts as the Cysteine persulfide intermediate; for sulfurtransferase activity in catalysis.

It in the N-terminal section; belongs to the HesA/MoeB/ThiF family. UBA4 subfamily. It depends on Zn(2+) as a cofactor.

It is found in the cytoplasm. The protein resides in the cytosol. It catalyses the reaction [molybdopterin-synthase sulfur-carrier protein]-C-terminal Gly-Gly + ATP + H(+) = [molybdopterin-synthase sulfur-carrier protein]-C-terminal Gly-Gly-AMP + diphosphate. The catalysed reaction is [molybdopterin-synthase sulfur-carrier protein]-C-terminal Gly-Gly-AMP + S-sulfanyl-L-cysteinyl-[cysteine desulfurase] + AH2 = [molybdopterin-synthase sulfur-carrier protein]-C-terminal-Gly-aminoethanethioate + L-cysteinyl-[cysteine desulfurase] + A + AMP + 2 H(+). The protein operates within tRNA modification; 5-methoxycarbonylmethyl-2-thiouridine-tRNA biosynthesis. Its function is as follows. Plays a central role in 2-thiolation of mcm(5)S(2)U at tRNA wobble positions of cytosolic tRNA(Lys), tRNA(Glu) and tRNA(Gln). Also essential during biosynthesis of the molybdenum cofactor. Acts by mediating the C-terminal thiocarboxylation of sulfur carriers URM1 and MOCS2A. Its N-terminus first activates urm1 and MOCS2A as acyl-adenylates (-COAMP), then the persulfide sulfur on the catalytic cysteine is transferred to URM1 and MOCS2A to form thiocarboxylation (-COSH) of their C-terminus. The reaction probably involves hydrogen sulfide that is generated from the persulfide intermediate and that acts as a nucleophile towards URM1 and MOCS2A. Subsequently, a transient disulfide bond is formed. Does not use thiosulfate as sulfur donor; NFS1 probably acting as a sulfur donor for thiocarboxylation reactions. This chain is Adenylyltransferase and sulfurtransferase uba4, found in Pyricularia oryzae (strain 70-15 / ATCC MYA-4617 / FGSC 8958) (Rice blast fungus).